The chain runs to 596 residues: Two-component response regulator ARR12 (596 aa).

Residues 18 to 133 (RVLAVDDDQT…ELKNIWQHVV (116 aa)) enclose the Response regulatory domain. Residue aspartate 69 is modified to 4-aspartylphosphate. The segment covering 138–153 (DKNRGSNNNGDKRDGS) has biased composition (basic and acidic residues). Positions 138–192 (DKNRGSNNNGDKRDGSGNEGVGNSDQNNGKGNRKRKDQYNEDEDEDRDDNDDSCA) are disordered. Positions 158-167 (VGNSDQNNGK) are enriched in polar residues. Acidic residues predominate over residues 177 to 189 (NEDEDEDRDDNDD). Positions 194–197 (KKQR) match the Nuclear localization signal motif. The segment at residues 197–247 (RVVWTVELHKKFVAAVNQLGYEKAMPKKILDLMNVEKLTRENVASHLQKFR) is a DNA-binding region (myb-like GARP). The segment at 437–467 (NAVSSSTHPPPPAHNSNSINHQFDVSPLPHS) is disordered. The span at 450–459 (HNSNSINHQF) shows a compositional bias: polar residues.

It belongs to the ARR family. Type-B subfamily. As to quaternary structure, binds the target DNA as a monomer. Two-component system major event consists of a His-to-Asp phosphorelay between a sensor histidine kinase (HK) and a response regulator (RR). In plants, the His-to-Asp phosphorelay involves an additional intermediate named Histidine-containing phosphotransfer protein (HPt). This multistep phosphorelay consists of a His-Asp-His-Asp sequential transfer of a phosphate group between first a His and an Asp of the HK protein, followed by the transfer to a conserved His of the HPt protein and finally the transfer to an Asp in the receiver domain of the RR protein. As to expression, detected in the whole plant. Predominantly expressed in leaves. Expressed at the root transition zone.

It localises to the nucleus. Functionally, transcriptional activator that binds specifically to the DNA sequence 5'-[AG]GATT-3'. Functions as a response regulator involved in His-to-Asp phosphorelay signal transduction system. Phosphorylation of the Asp residue in the receiver domain activates the ability of the protein to promote the transcription of target genes. Could directly activate some type-A response regulators in response to cytokinins. Involved in the root-meristem size determination through the regulation of cell differentiation. Involved in activating SHY2 during meristem growth and controls PIN expression via activation of SHY2. The chain is Two-component response regulator ARR12 (ARR12) from Arabidopsis thaliana (Mouse-ear cress).